The sequence spans 293 residues: Ankyrin repeat and SOCS box protein 11 (293 aa).

ANK repeat units follow at residues 36-65, 69-98, 102-131, 134-163, 167-196, 199-228, and 232-259; these read DDRT…NVGM, DGIT…DANA, DGAT…AHHP, LLCS…NVDM, SVGT…DVQC, GLDT…DRTS, and EGKT…SLSQ. The SOCS box domain occupies 244–293; that stretch reads SIKHLLQTAGTCSLSQLCRWCIRRSLGQKGLNKTKTLCLPHMLHNYLLYH.

This sequence belongs to the ankyrin SOCS box (ASB) family. As to quaternary structure, substrate-recognition component of the ECS(ASB11) complex, composed of asb11, cul5, elob, eloc and rnf7/rbx2. Expressed in the developing nervous system: localizes to neural plate margins and is abutting the proneuronal zone.

It is found in the endoplasmic reticulum. It participates in protein modification; protein ubiquitination. Substrate-recognition component of a cullin-5-RING E3 ubiquitin-protein ligase complex (ECS complex, also named CRL5 complex), which mediates the ubiquitination and subsequent proteasomal degradation of target proteins. Acts as a regulator of the neuronal progenitor compartment size by maintaining the neural precursors in the proliferating undifferentiated state. The ECS(ASB11) complex acts as a positive regulator of Notch signaling pathway by mediating ubiquitination and degradation of DeltaA (dla). Also acts as a regulator of regenerative myogenesis. This Danio rerio (Zebrafish) protein is Ankyrin repeat and SOCS box protein 11.